Consider the following 211-residue polypeptide: Peptide methionine sulfoxide reductase MsrA (211 aa).

Cysteine 60 is an active-site residue.

The protein belongs to the MsrA Met sulfoxide reductase family.

It catalyses the reaction L-methionyl-[protein] + [thioredoxin]-disulfide + H2O = L-methionyl-(S)-S-oxide-[protein] + [thioredoxin]-dithiol. The catalysed reaction is [thioredoxin]-disulfide + L-methionine + H2O = L-methionine (S)-S-oxide + [thioredoxin]-dithiol. Functionally, has an important function as a repair enzyme for proteins that have been inactivated by oxidation. Catalyzes the reversible oxidation-reduction of methionine sulfoxide in proteins to methionine. The polypeptide is Peptide methionine sulfoxide reductase MsrA (Methanosarcina mazei (strain ATCC BAA-159 / DSM 3647 / Goe1 / Go1 / JCM 11833 / OCM 88) (Methanosarcina frisia)).